The following is a 559-amino-acid chain: 2-succinyl-5-enolpyruvyl-6-hydroxy-3-cyclohexene-1-carboxylate synthase (559 aa).

This sequence belongs to the TPP enzyme family. MenD subfamily. As to quaternary structure, homodimer. Requires Mg(2+) as cofactor. Mn(2+) serves as cofactor. The cofactor is thiamine diphosphate.

The catalysed reaction is isochorismate + 2-oxoglutarate + H(+) = 5-enolpyruvoyl-6-hydroxy-2-succinyl-cyclohex-3-ene-1-carboxylate + CO2. It functions in the pathway quinol/quinone metabolism; 1,4-dihydroxy-2-naphthoate biosynthesis; 1,4-dihydroxy-2-naphthoate from chorismate: step 2/7. Its pathway is quinol/quinone metabolism; menaquinone biosynthesis. Its function is as follows. Catalyzes the thiamine diphosphate-dependent decarboxylation of 2-oxoglutarate and the subsequent addition of the resulting succinic semialdehyde-thiamine pyrophosphate anion to isochorismate to yield 2-succinyl-5-enolpyruvyl-6-hydroxy-3-cyclohexene-1-carboxylate (SEPHCHC). The chain is 2-succinyl-5-enolpyruvyl-6-hydroxy-3-cyclohexene-1-carboxylate synthase from Cytophaga hutchinsonii (strain ATCC 33406 / DSM 1761 / CIP 103989 / NBRC 15051 / NCIMB 9469 / D465).